A 102-amino-acid polypeptide reads, in one-letter code: uncharacterized protein (102 aa).

The N-terminal stretch at 1 to 19 (MFLFCFVLFCSLVFPLARG) is a signal peptide.

This is an uncharacterized protein from Saccharomyces cerevisiae (strain ATCC 204508 / S288c) (Baker's yeast).